Consider the following 488-residue polypeptide: Glycogen synthase (488 aa).

Arg20 provides a ligand contact to ADP-alpha-D-glucose.

The protein belongs to the glycosyltransferase 1 family. Bacterial/plant glycogen synthase subfamily.

It carries out the reaction [(1-&gt;4)-alpha-D-glucosyl](n) + ADP-alpha-D-glucose = [(1-&gt;4)-alpha-D-glucosyl](n+1) + ADP + H(+). It participates in glycan biosynthesis; glycogen biosynthesis. Synthesizes alpha-1,4-glucan chains using ADP-glucose. The chain is Glycogen synthase from Chlorobaculum parvum (strain DSM 263 / NCIMB 8327) (Chlorobium vibrioforme subsp. thiosulfatophilum).